The following is a 529-amino-acid chain: Keratin, type II cytoskeletal 74 (529 aa).

The segment at 1-139 (MSRQLNIKSS…DPEIQKVRAQ (139 aa)) is head. A coil 1A region spans residues 140 to 175 (EREQIKVLNDKFASFIDKVRFLEQQNQVLETKWELL). The IF rod domain occupies 140–453 (EREQIKVLND…KLLEGEECRM (314 aa)). Positions 176–194 (QQLDLNNCKKNLEPILEGY) are linker 1. The segment at 195 to 286 (ISNLRKQLET…CLYDAEIAQI (92 aa)) is coil 1B. The segment at 287 to 310 (QTHASETSVILSMDNNRDLDLDSI) is linker 12. The tract at residues 311-449 (IAEVRMHYEE…ATYRKLLEGE (139 aa)) is coil 2. The segment at 450-529 (ECRMSGENPS…ASIPARKATR (80 aa)) is tail. Positions 484-500 (GASAVAGSSGSTQSGQT) are enriched in low complexity. Positions 484 to 529 (GASAVAGSSGSTQSGQTKTTEARGGDLKDTQGKSTPASIPARKATR) are disordered. A compositionally biased stretch (basic and acidic residues) spans 503-514 (TEARGGDLKDTQ). T513 bears the Phosphothreonine mark.

It belongs to the intermediate filament family. As to quaternary structure, heterotetramer of two type I and two type II keratins. Highly expressed in hair follicles from scalp. In hair, it is specifically present in the inner root sheath (IRS) of the hair follicle. Present in the IRS Huxley layer, but not in Henle layer or cuticle of the IRS. In the IRS Huxley layer, it is expressed in specialized Huxley cells, termed 'Fluegelzellen, along the area of differentiated Henle cells (at protein level).

Its function is as follows. Has a role in hair formation. Specific component of keratin intermediate filaments in the inner root sheath (IRS) of the hair follicle. This is Keratin, type II cytoskeletal 74 (KRT74) from Homo sapiens (Human).